A 3133-amino-acid polypeptide reads, in one-letter code: Probable polyketide synthase 38 (3133 aa).

Residues 9-440 (DDDVAVIGIG…GSNVCLILSE (432 aa)) enclose the Ketosynthase family 3 (KS3) domain. Catalysis depends on for beta-ketoacyl synthase activity residues C181, H320, and H363. The tract at residues 647–680 (GVSADIIIGHSLGEISSAYCSGMIDFQTLCYLTY) is acyl/malonyl transferase. The For acyl/malonyl transferase activity role is filled by S657. Residues 945–1067 (GPSIHSLGNN…GNFSLSKHNI (123 aa)) are N-terminal hotdog fold. One can recognise a PKS/mFAS DH domain in the interval 945–1248 (GPSIHSLGNN…CTIVASNPDS (304 aa)). H979 functions as the Proton acceptor; for dehydratase activity in the catalytic mechanism. Residues 1083-1248 (NFTCISKQDL…CTIVASNPDS (166 aa)) form a C-terminal hotdog fold region. D1155 functions as the Proton donor; for dehydratase activity in the catalytic mechanism. A disordered region spans residues 1370–1408 (NNNNNNNNNNNNNNNNNNNNNNNNNNNNNNNNNDNDNDN). In terms of domain architecture, Carrier spans 2562–2639 (NNNEIIRSTI…QSIEIIKSAH (78 aa)). The residue at position 2599 (S2599) is an O-(pantetheine 4'-phosphoryl)serine. Residues 2649-2711 (NNNNSNHHDN…NNNNNNNNNN (63 aa)) adopt a coiled-coil conformation. Disordered regions lie at residues 2691–2715 (LNNN…NNNN) and 2794–2817 (GNIS…NNNQ). 2 stretches are compositionally biased toward low complexity: residues 2692 to 2715 (NNNN…NNNN) and 2795 to 2817 (NISN…NNNQ).

Pantetheine 4'-phosphate is required as a cofactor.

Its function is as follows. Probable polyketide synthase. In Dictyostelium discoideum (Social amoeba), this protein is Probable polyketide synthase 38 (pks38).